The chain runs to 100 residues: Esterase PE11 (100 aa).

One can recognise a PE domain in the interval 4–94 (VTTRPDSIGE…TSYWLTELAN (91 aa)).

It belongs to the mycobacterial PE family.

It is found in the secreted. The protein localises to the cell wall. The catalysed reaction is an acetyl ester + H2O = an aliphatic alcohol + acetate + H(+). It catalyses the reaction a butanoate ester + H2O = an aliphatic alcohol + butanoate + H(+). It carries out the reaction an octanoate ester + H2O = an aliphatic alcohol + octanoate + H(+). Functionally, involved in cell wall lipids remodeling and in virulence. Restricts the biofilm growth and is essential for the optimal intracellular survival of M.tuberculosis. Shows esterase activity with a preference for short-chain esters, particularly pNP-acetate (C2) and pNP-butyrate (C4). Has weaker activity with pNP-octanoate (C8), pNP-laurate (C12) and pNP-myristate (C14). Shows weak long-chain triacylglycerol (TAG) hydrolase activity in vitro. Not necessary for PPE17 stability or for its localization on the mycobacterial surface. This chain is Esterase PE11, found in Mycobacterium tuberculosis (strain ATCC 25618 / H37Rv).